We begin with the raw amino-acid sequence, 172 residues long: 3-hydroxydecanoyl-[acyl-carrier-protein] dehydratase (172 aa).

His-71 is a catalytic residue.

It belongs to the thioester dehydratase family. FabA subfamily. Homodimer.

The protein localises to the cytoplasm. It carries out the reaction a (3R)-hydroxyacyl-[ACP] = a (2E)-enoyl-[ACP] + H2O. The enzyme catalyses (3R)-hydroxydecanoyl-[ACP] = (2E)-decenoyl-[ACP] + H2O. It catalyses the reaction (2E)-decenoyl-[ACP] = (3Z)-decenoyl-[ACP]. It participates in lipid metabolism; fatty acid biosynthesis. Functionally, necessary for the introduction of cis unsaturation into fatty acids. Catalyzes the dehydration of (3R)-3-hydroxydecanoyl-ACP to E-(2)-decenoyl-ACP and then its isomerization to Z-(3)-decenoyl-ACP. Can catalyze the dehydratase reaction for beta-hydroxyacyl-ACPs with saturated chain lengths up to 16:0, being most active on intermediate chain length. The sequence is that of 3-hydroxydecanoyl-[acyl-carrier-protein] dehydratase from Sodalis glossinidius (strain morsitans).